Reading from the N-terminus, the 54-residue chain is Relaxin (54 aa).

The residue at position 1 (Gln1) is a Pyrrolidone carboxylic acid. 3 disulfides stabilise this stretch: Cys10–Cys41, Cys22–Cys54, and Cys40–Cys45.

The protein belongs to the insulin family. As to quaternary structure, heterodimer of a B chain and an A chain linked by two disulfide bonds.

The protein localises to the secreted. In terms of biological role, relaxin is an ovarian hormone that acts with estrogen to produce dilatation of the birth canal in many mammals. The protein is Relaxin of Balaenoptera edeni (Pigmy Bryde's whale).